The chain runs to 59 residues: Conorfamide-Vc1 (59 aa).

Residues 1–19 (MSGRGFLLLALLLLVTVEA) form the signal peptide. The propeptide occupies 20–25 (TKVEKK). The tract at residues 32–39 (AWSGPRNR) is positively charged region crucial for activity against MRGPRX1 receptors. F43 is modified (phenylalanine amide). A propeptide spanning residues 45–59 (RRDMQSPLLSERLRL) is cleaved from the precursor.

The protein belongs to the FARP (FMRFamide related peptide) family. As to expression, expressed by the venom duct.

It localises to the secreted. Functionally, this peptide activates human and mouse sensory neuron-specific G-protein coupled receptors MRGPRX1. The activity on human receptors has been measured (EC(50)=1.8 uM). Compared with the agonist chloroquine (anti-malaria drug), it is 200-fold more potent. The peptide also causes an increase in cytosolic calcium in a specific subset of DRG neurons, and, in contrast to other Conus venom peptides, the peptide also affects a large fraction of the non-neuronal cells. In vivo, when intracranially injected into mice, it principally renders mice unable to move, and at very low doses, it causes hyperactivity. It also induces itch sensation, since intradermal cheek injection into humanized transgenic mouse (mouse MRGPRX1 replaced by human MRGPRX1) induces scratching. In vivo, when tested at high doses (10 uM) on zebrafish larvae, it induces a range of behavioral effects ranging from an early hypoactivity during the first hour of treatment to an increase in movement during the following hours when the larvae are submitted to strobe light phases. The protein is Conorfamide-Vc1 of Conus victoriae (Queen Victoria cone).